The chain runs to 82 residues: Chlorosome protein E (82 aa).

His-26 lines the a bacteriochlorophyll c pocket. Residues 55–82 (GSSGLKGSSPKYSGYATPSKEVKSRFEK) are disordered. Positions 59-69 (LKGSSPKYSGY) are enriched in low complexity.

It belongs to the BChl C/E-binding protein family.

Its subcellular location is the chlorosome. The protein localises to the chlorosome envelope. Component of the photosynthetic apparatus. The light harvesting B740 complex binds bacteriochlorophyll c. The polypeptide is Chlorosome protein E (csmE) (Chlorobaculum tepidum (strain ATCC 49652 / DSM 12025 / NBRC 103806 / TLS) (Chlorobium tepidum)).